We begin with the raw amino-acid sequence, 40 residues long: Adenylate kinase (40 aa).

Residue 10 to 15 coordinates ATP; the sequence is GAGKGT. Positions 30 to 40 are NMP; that stretch reads STGDMFIKAIK. Position 31 (Thr-31) interacts with AMP.

Belongs to the adenylate kinase family. In terms of assembly, monomer.

The protein localises to the cytoplasm. The enzyme catalyses AMP + ATP = 2 ADP. It participates in purine metabolism; AMP biosynthesis via salvage pathway; AMP from ADP: step 1/1. Functionally, catalyzes the reversible transfer of the terminal phosphate group between ATP and AMP. Plays an important role in cellular energy homeostasis and in adenine nucleotide metabolism. The polypeptide is Adenylate kinase (adk) (Staphylococcus carnosus).